The primary structure comprises 456 residues: MARGDAPRDSYHLVGISFFILGLGTLLPWNFFITAIPYFQARLAGAGNSTARILSTNHTGPEDAFNFNNWVTLLSQLPLLLFTLLNSFLYQCVPETVRILGSLLAILLLFALTAALVKVDMSPGPFFSITMASVCFINSFSAVLQGSLFGQLGTMPSTYSTLFLSGQGLAGIFAALAMLLSMASGVDAETSALGYFITPCVGILMSIVCYLSLPHLKFARYYLANKSSQAQAQELETKAELLQSDENGIPSSPQKVALTLDLDLEKEPESEPDEPQKPGKPSVFTVFQKIWLTALCLVLVFTVTLSVFPAITAMVTSSTSPGKWSQFFNPICCFLLFNIMDWLGRSLTSYFLWPDEDSRLLPLLVCLRFLFVPLFMLCHVPQRSRLPILFPQDAYFITFMLLFAVSNGYLVSLTMCLAPRQVLPHEREVAGALMTFFLALGLSCGASLSFLFKALL.

A helical transmembrane segment spans residues 13–33; that stretch reads LVGISFFILGLGTLLPWNFFI. N48 and N57 each carry an N-linked (GlcNAc...) asparagine glycan. Helical transmembrane passes span 70 to 90, 99 to 119, 124 to 144, 162 to 182, and 193 to 213; these read WVTL…SFLY, ILGS…LVKV, GPFF…SAVL, LFLS…LLSM, and LGYF…YLSL. N225 carries N-linked (GlcNAc...) asparagine glycosylation. S252 bears the Phosphoserine mark. 5 consecutive transmembrane segments (helical) span residues 291–311, 324–344, 360–380, 386–406, and 432–452; these read WLTA…FPAI, WSQF…DWLG, LLPL…LCHV, LPIL…FAVS, and ALMT…SFLF.

The protein belongs to the SLC29A/ENT transporter (TC 2.A.57) family. Post-translationally, glycosylated. Highly expressed in skeletal muscle. Expressed in liver, lung, placenta, brain, heart, kidney and ovarian tissues. Expressed in testis at the blood-brain-barrier.

It is found in the apical cell membrane. The protein localises to the basolateral cell membrane. It catalyses the reaction inosine(in) = inosine(out). The enzyme catalyses adenosine(in) = adenosine(out). It carries out the reaction uridine(out) = uridine(in). The catalysed reaction is thymidine(in) = thymidine(out). It catalyses the reaction hypoxanthine(out) = hypoxanthine(in). The enzyme catalyses adenine(out) = adenine(in). It carries out the reaction cytidine(in) = cytidine(out). The catalysed reaction is thymine(out) = thymine(in). It catalyses the reaction uracil(in) = uracil(out). The enzyme catalyses guanine(out) = guanine(in). It carries out the reaction guanosine(in) = guanosine(out). Bidirectional uniporter involved in the facilitative transport of nucleosides and nucleobases, and contributes to maintaining their cellular homeostasis. Functions as a Na(+)-independent, passive transporter. Involved in the transport of nucleosides such as inosine, adenosine, uridine, thymidine, cytidine and guanosine. Also able to transport purine nucleobases (hypoxanthine, adenine, guanine) and pyrimidine nucleobases (thymine, uracil). Involved in nucleoside transport at basolateral membrane of kidney cells, allowing liver absorption of nucleoside metabolites. Mediates apical nucleoside uptake into Sertoli cells, thereby regulating the transport of nucleosides in testis across the blood-testis-barrier. Mediates both the influx and efflux of hypoxanthine in skeletal muscle microvascular endothelial cells to control the amount of intracellular hypoxanthine available for xanthine oxidase-mediated ROS production. Its function is as follows. Non functional nucleoside transporter protein for adenosine or thymidine transport. Does not express on cell membrane. This chain is Equilibrative nucleoside transporter 2, found in Homo sapiens (Human).